We begin with the raw amino-acid sequence, 321 residues long: Chloroplastic calcium uniporter protein (321 aa).

The transit peptide at 1 to 56 (MSSKKSLVQSLFNISKTYSRISGLTRMRPTKSGGIPPDAGDSGIRRRFLHKRAFFS) directs the protein to the chloroplast. A run of 2 helical transmembrane segments spans residues 223–243 (LWAG…LTFW) and 249–269 (VMEP…YAFF). The short motif at 247-255 (WDVMEPICF) is the Selectivity filter element. Glu-251 is a binding site for Ca(2+).

The protein belongs to the MCU (TC 1.A.77) family.

The protein resides in the plastid. It is found in the chloroplast membrane. The enzyme catalyses Ca(2+)(in) = Ca(2+)(out). Its function is as follows. Chloroplastic membrane calcium uniporter that mediates calcium uptake into chloroplast stroma. Constitutes a pore-forming and calcium-conducting subunit. Chloroplastic calcium homeostasis plays key roles in cellular physiology. Promotes calcium uptake into chloroplast stroma in response to osmotic-stress, fine-tuning cytosolic MAPK3/MAPK6 phosphorylation and affecting stomata opening. The chain is Chloroplastic calcium uniporter protein from Arabidopsis thaliana (Mouse-ear cress).